A 141-amino-acid polypeptide reads, in one-letter code: Large ribosomal subunit protein uL11 (141 aa).

Belongs to the universal ribosomal protein uL11 family. As to quaternary structure, part of the ribosomal stalk of the 50S ribosomal subunit. Interacts with L10 and the large rRNA to form the base of the stalk. L10 forms an elongated spine to which L12 dimers bind in a sequential fashion forming a multimeric L10(L12)X complex. In terms of processing, one or more lysine residues are methylated.

Functionally, forms part of the ribosomal stalk which helps the ribosome interact with GTP-bound translation factors. This is Large ribosomal subunit protein uL11 from Campylobacter fetus subsp. fetus (strain 82-40).